A 240-amino-acid polypeptide reads, in one-letter code: Probable xyloglucan-specific endo-beta-1,4-glucanase A (240 aa).

The first 15 residues, Met1–Ala15, serve as a signal peptide directing secretion.

This sequence belongs to the glycosyl hydrolase 12 (cellulase H) family.

Its subcellular location is the secreted. The enzyme catalyses xyloglucan + H2O = xyloglucan oligosaccharides.. Catalyzes endohydrolysis of 1,4-beta-D-glucosidic linkages in xyloglucan with retention of the beta-configuration of the glycosyl residues. Specific for xyloglucan and does not hydrolyze other cell wall components. The protein is Probable xyloglucan-specific endo-beta-1,4-glucanase A (xgeA) of Aspergillus oryzae (strain ATCC 42149 / RIB 40) (Yellow koji mold).